The following is a 102-amino-acid chain: Small ribosomal subunit protein uS10 (102 aa).

This sequence belongs to the universal ribosomal protein uS10 family. As to quaternary structure, part of the 30S ribosomal subunit.

Its function is as follows. Involved in the binding of tRNA to the ribosomes. The sequence is that of Small ribosomal subunit protein uS10 from Geobacter sulfurreducens (strain ATCC 51573 / DSM 12127 / PCA).